The following is a 455-amino-acid chain: Chromosomal replication initiator protein DnaA (455 aa).

The domain I, interacts with DnaA modulators stretch occupies residues 1–75; sequence MLERNDLWNL…AMQATNEQIR (75 aa). Residues 75–117 are domain II; it reads RPVMITEEERQQLTRDKDSQVTTGNVAGQQPTTATTPTFMRET. The segment covering 84 to 93 has biased composition (basic and acidic residues); that stretch reads RQQLTRDKDS. The disordered stretch occupies residues 84 to 107; it reads RQQLTRDKDSQVTTGNVAGQQPTT. A domain III, AAA+ region region spans residues 118 to 334; sequence KLNPKYTFDT…GALARVQAYS (217 aa). ATP is bound by residues Gly-162, Gly-164, Lys-165, and Thr-166. The domain IV, binds dsDNA stretch occupies residues 335–455; it reads RLNNSPITTS…VGDLTGQLKS (121 aa).

This sequence belongs to the DnaA family. In terms of assembly, oligomerizes as a right-handed, spiral filament on DNA at oriC.

The protein localises to the cytoplasm. In terms of biological role, plays an essential role in the initiation and regulation of chromosomal replication. ATP-DnaA binds to the origin of replication (oriC) to initiate formation of the DNA replication initiation complex once per cell cycle. Binds the DnaA box (a 9 base pair repeat at the origin) and separates the double-stranded (ds)DNA. Forms a right-handed helical filament on oriC DNA; dsDNA binds to the exterior of the filament while single-stranded (ss)DNA is stabiized in the filament's interior. The ATP-DnaA-oriC complex binds and stabilizes one strand of the AT-rich DNA unwinding element (DUE), permitting loading of DNA polymerase. After initiation quickly degrades to an ADP-DnaA complex that is not apt for DNA replication. Binds acidic phospholipids. This Lactiplantibacillus plantarum (strain ATCC BAA-793 / NCIMB 8826 / WCFS1) (Lactobacillus plantarum) protein is Chromosomal replication initiator protein DnaA.